A 69-amino-acid polypeptide reads, in one-letter code: uncharacterized protein (69 aa).

An N-terminal signal peptide occupies residues 1–18 (MAMLWISMFIIMRKYGRS). The segment at 17–69 (RSSSSSSSSSSSSSSSSSSSSSSSSSSSSSSSSSSSSSSSSGSSSNSNRVVVV) is disordered. Residues 18-61 (SSSSSSSSSSSSSSSSSSSSSSSSSSSSSSSSSSSSSSSSGSSS) show a composition bias toward low complexity.

Its subcellular location is the secreted. This is an uncharacterized protein from Dictyostelium discoideum (Social amoeba).